Here is a 372-residue protein sequence, read N- to C-terminus: Putative glutamate--cysteine ligase 2 (372 aa).

It belongs to the glutamate--cysteine ligase type 2 family. YbdK subfamily.

The catalysed reaction is L-cysteine + L-glutamate + ATP = gamma-L-glutamyl-L-cysteine + ADP + phosphate + H(+). In terms of biological role, ATP-dependent carboxylate-amine ligase which exhibits weak glutamate--cysteine ligase activity. The protein is Putative glutamate--cysteine ligase 2 of Rhodopirellula baltica (strain DSM 10527 / NCIMB 13988 / SH1).